The primary structure comprises 428 residues: FAD-dependent monooxygenase kojA (428 aa).

Residues 52–60 and 328–329 contribute to the FAD site; these read RLHKGPHYP and SV.

The protein belongs to the aromatic-ring hydroxylase family. FAD is required as a cofactor.

In terms of biological role, probable FAD-dependent monooxygenase; part of the gene cluster that mediates the biosynthesis of 5-hydroxy-2-hydroxymethyl-1,4-pyrone, also know as kojic acid, a by-product in the fermentation process of malting rice that acts as a chelation agent. Glucose might be converted to kojic acid by a combination of dehydrogenase and dehydratase reactions involving kojA and probably additional enzymes. This Aspergillus flavus (strain ATCC 200026 / FGSC A1120 / IAM 13836 / NRRL 3357 / JCM 12722 / SRRC 167) protein is FAD-dependent monooxygenase kojA.